Reading from the N-terminus, the 457-residue chain is Serine/threonine-protein phosphatase 2A regulatory subunit B'' subunit gamma (457 aa).

2 EF-hand domains span residues 276-311 (PSAL…TLTS) and 344-379 (KEPA…IQEQ). D289, D291, N293, M295, and E300 together coordinate Ca(2+).

The protein resides in the nucleus. It is found in the cytoplasm. Its function is as follows. Possible role in the regulation of cell death. This is Serine/threonine-protein phosphatase 2A regulatory subunit B'' subunit gamma (ppp2r3c) from Danio rerio (Zebrafish).